Consider the following 160-residue polypeptide: Prorelaxin (160 aa).

Intrachain disulfides connect Cys10–Cys147, Cys22–Cys160, and Cys146–Cys151. Residues 34–133 (QEKQRILGSG…KDFNLNIYSP (100 aa)) constitute a propeptide, connecting peptide.

The protein belongs to the insulin family. Heterodimer of a B chain and an A chain linked by two disulfide bonds. As to expression, expressed in the endometrium during pregnancy and in mammary gland during lactation.

It localises to the secreted. Functionally, relaxin is an ovarian hormone that acts with estrogen to produce dilatation of the birth canal in many mammals. It bears mature young, and allows separation of the pelvic bones. The protein is Prorelaxin (RLN) of Cavia porcellus (Guinea pig).